We begin with the raw amino-acid sequence, 86 residues long: Omega-theraphotoxin-Hhn1f 4 (86 aa).

The first 21 residues, 1 to 21 (MKSIVFVALFGLALLAVVCSA), serve as a signal peptide directing secretion. Positions 22–50 (SEDAHKELLKEVVRAMVVDKTDAVQAGER) are excised as a propeptide. Intrachain disulfides connect C52–C66, C59–C71, and C65–C78.

This sequence belongs to the neurotoxin 10 (Hwtx-1) family. 17 (Hntx-9) subfamily. Expressed by the venom gland.

The protein localises to the secreted. Functionally, ion channel inhibitor. The chain is Omega-theraphotoxin-Hhn1f 4 from Cyriopagopus hainanus (Chinese bird spider).